The sequence spans 85 residues: Beta-insect depressant toxin Lqh-dprIT3f (85 aa).

A signal peptide spans 1–21 (MKLLLLLTISASMLIEGLVNA). The LCN-type CS-alpha/beta domain maps to 22 to 82 (DGYIRGGDGC…EWDYETDTCG (61 aa)). 4 disulfides stabilise this stretch: Cys31-Cys81, Cys35-Cys56, Cys42-Cys63, and Cys46-Cys65. Residue Gly82 is modified to Glycine amide.

Belongs to the long (4 C-C) scorpion toxin superfamily. Sodium channel inhibitor family. Beta subfamily. In terms of tissue distribution, expressed by the venom gland.

Its subcellular location is the secreted. Depressant insect beta-toxins cause a transient contraction paralysis followed by a slow flaccid paralysis. They bind voltage-independently at site-4 of sodium channels (Nav) and block action potentials, primarily by depolarizing the axonal membrane and suppressing the sodium current. This depressant toxin is active only on insects. It is found in a relatively small amount in the venom. This Leiurus hebraeus (Hebrew deathstalker scorpion) protein is Beta-insect depressant toxin Lqh-dprIT3f.